A 179-amino-acid chain; its full sequence is Large ribosomal subunit protein uL5 (179 aa).

Belongs to the universal ribosomal protein uL5 family. As to quaternary structure, part of the 50S ribosomal subunit; part of the 5S rRNA/L5/L18/L25 subcomplex. Contacts the 5S rRNA and the P site tRNA. Forms a bridge to the 30S subunit in the 70S ribosome.

Its function is as follows. This is one of the proteins that bind and probably mediate the attachment of the 5S RNA into the large ribosomal subunit, where it forms part of the central protuberance. In the 70S ribosome it contacts protein S13 of the 30S subunit (bridge B1b), connecting the 2 subunits; this bridge is implicated in subunit movement. Contacts the P site tRNA; the 5S rRNA and some of its associated proteins might help stabilize positioning of ribosome-bound tRNAs. The sequence is that of Large ribosomal subunit protein uL5 from Exiguobacterium sp. (strain ATCC BAA-1283 / AT1b).